The following is a 158-amino-acid chain: Small ribosomal subunit protein uS19 (158 aa).

This sequence belongs to the universal ribosomal protein uS19 family.

Protein S19 forms a complex with S13 that binds strongly to the 16S ribosomal RNA. In Pyrobaculum aerophilum (strain ATCC 51768 / DSM 7523 / JCM 9630 / CIP 104966 / NBRC 100827 / IM2), this protein is Small ribosomal subunit protein uS19.